Here is a 256-residue protein sequence, read N- to C-terminus: Thiazole synthase (256 aa).

The active-site Schiff-base intermediate with DXP is Lys96. 1-deoxy-D-xylulose 5-phosphate contacts are provided by residues Gly157, 183-184 (AG), and 205-206 (NT).

It belongs to the ThiG family. As to quaternary structure, homotetramer. Forms heterodimers with either ThiH or ThiS.

The protein localises to the cytoplasm. It catalyses the reaction [ThiS sulfur-carrier protein]-C-terminal-Gly-aminoethanethioate + 2-iminoacetate + 1-deoxy-D-xylulose 5-phosphate = [ThiS sulfur-carrier protein]-C-terminal Gly-Gly + 2-[(2R,5Z)-2-carboxy-4-methylthiazol-5(2H)-ylidene]ethyl phosphate + 2 H2O + H(+). Its pathway is cofactor biosynthesis; thiamine diphosphate biosynthesis. Catalyzes the rearrangement of 1-deoxy-D-xylulose 5-phosphate (DXP) to produce the thiazole phosphate moiety of thiamine. Sulfur is provided by the thiocarboxylate moiety of the carrier protein ThiS. In vitro, sulfur can be provided by H(2)S. This Clostridium beijerinckii (strain ATCC 51743 / NCIMB 8052) (Clostridium acetobutylicum) protein is Thiazole synthase.